We begin with the raw amino-acid sequence, 97 residues long: Small ribosomal subunit protein bS6 (97 aa).

The protein belongs to the bacterial ribosomal protein bS6 family.

Binds together with bS18 to 16S ribosomal RNA. The protein is Small ribosomal subunit protein bS6 of Dictyoglomus turgidum (strain DSM 6724 / Z-1310).